The primary structure comprises 340 residues: Ornithine carbamoyltransferase (340 aa).

Carbamoyl phosphate contacts are provided by residues 57 to 60 (STRT), glutamine 84, arginine 108, and 135 to 138 (HPTQ). L-ornithine is bound by residues asparagine 167, aspartate 231, and 235–236 (SM). Residues 272 to 273 (CL) and arginine 317 contribute to the carbamoyl phosphate site.

The protein belongs to the aspartate/ornithine carbamoyltransferase superfamily. OTCase family.

It is found in the cytoplasm. It catalyses the reaction carbamoyl phosphate + L-ornithine = L-citrulline + phosphate + H(+). Its pathway is amino-acid biosynthesis; L-arginine biosynthesis; L-arginine from L-ornithine and carbamoyl phosphate: step 1/3. Its function is as follows. Reversibly catalyzes the transfer of the carbamoyl group from carbamoyl phosphate (CP) to the N(epsilon) atom of ornithine (ORN) to produce L-citrulline. The protein is Ornithine carbamoyltransferase (argF) of Lactiplantibacillus plantarum (strain ATCC BAA-793 / NCIMB 8826 / WCFS1) (Lactobacillus plantarum).